We begin with the raw amino-acid sequence, 199 residues long: Nucleoside triphosphate pyrophosphatase (199 aa).

Asp-76 acts as the Proton acceptor in catalysis.

Belongs to the Maf family. A divalent metal cation is required as a cofactor.

Its subcellular location is the cytoplasm. The enzyme catalyses a ribonucleoside 5'-triphosphate + H2O = a ribonucleoside 5'-phosphate + diphosphate + H(+). It catalyses the reaction a 2'-deoxyribonucleoside 5'-triphosphate + H2O = a 2'-deoxyribonucleoside 5'-phosphate + diphosphate + H(+). Nucleoside triphosphate pyrophosphatase. May have a dual role in cell division arrest and in preventing the incorporation of modified nucleotides into cellular nucleic acids. The polypeptide is Nucleoside triphosphate pyrophosphatase (Roseobacter denitrificans (strain ATCC 33942 / OCh 114) (Erythrobacter sp. (strain OCh 114))).